The following is a 199-amino-acid chain: Recombination protein RecR (199 aa).

The C4-type zinc finger occupies 57–72 (CSICGNITEDDPCDIC). The Toprim domain occupies 80–176 (KAVLVVEDSK…KVTRLAHGLS (97 aa)).

This sequence belongs to the RecR family.

Its function is as follows. May play a role in DNA repair. It seems to be involved in an RecBC-independent recombinational process of DNA repair. It may act with RecF and RecO. The sequence is that of Recombination protein RecR from Pediococcus pentosaceus (strain ATCC 25745 / CCUG 21536 / LMG 10740 / 183-1w).